Consider the following 73-residue polypeptide: Sec-independent protein translocase protein TatA (73 aa).

Residues 1-21 (MGSFSIWHWLIVLVIVMLVFG) traverse the membrane as a helical segment. Positions 43 to 73 (MKEGDDKAAPAKELRDSTTIDVDAKEKTRQQ) are disordered.

This sequence belongs to the TatA/E family. In terms of assembly, the Tat system comprises two distinct complexes: a TatABC complex, containing multiple copies of TatA, TatB and TatC subunits, and a separate TatA complex, containing only TatA subunits. Substrates initially bind to the TatABC complex, which probably triggers association of the separate TatA complex to form the active translocon.

The protein resides in the cell inner membrane. Its function is as follows. Part of the twin-arginine translocation (Tat) system that transports large folded proteins containing a characteristic twin-arginine motif in their signal peptide across membranes. TatA could form the protein-conducting channel of the Tat system. This chain is Sec-independent protein translocase protein TatA, found in Cupriavidus pinatubonensis (strain JMP 134 / LMG 1197) (Cupriavidus necator (strain JMP 134)).